Reading from the N-terminus, the 1179-residue chain is MGLQFILGDATTDHAGTMATMVQANLQADSQNQIFYLVPNHIKFEAEVDLLKRLRAQAASVNGVYAQNRVQVLSFSRLAWYFLKNTALYQQPRLDRASNTMLVAKILGESKEELTIYAGEAHNTGFVTQLADQLSELVTGRITAEDLNTTVAALTPGDRHRAKLRDLGIILDHYEAEIGPYATNASLLSGLQQVMRNQDLSHTFIYLNDFNVFSASETGLVETMIETAAEVTVSLVLNKPYPAAPPVAPNLFLPAGRLYHRLYQKAKTMKVPIRLDRFAKPRPLSEGMNHLADWWQTSTNLQPQAPAQTAQNKEVELAVATDPYHELRTVARQIYQAVRQGARYRDFLILARRLDPYAAVIPAIFEEFNIPQFTDLERPMKDHPLVVLIESLFAIQDHDYQYQDVMRLLHTELLLPENMDIAAFRDALDTTDNHLVRTGITGKKRWTQTDPWRYFQRNPNADDSQLDPEADKTAQINAIKTLVADTVPQLLRQWQTAKTGREAAASLYQWLQTTGVIDQLNVWRQTANADGDLSRSQANEQAWDTFTQLLNDYATILGEADFNRDQFRELLAAGFASATYTQIPSTLDSVVISETGLVRLAKAKHVYVIGATNTAMPDVPNDSGVLNSEERQLLAAQLPDDRFLPEQGPTTTLGDPFINYLGFMAASEKLTLSYPMQNTQENSENQASPYFRQLAQALQLTPATWAPAGLGTSLKAVLGSPRAMLSDFVRAAGEAQHQKLPLSRSWQGVLASLKQTKLAPLAQKLAGSLTYQNNPGRLDPTLAVQLYGRDMNVSVSRLETYYRNQFEYFLKYGLLLQPRPEFELSPADTGSLFHAVLDQYLTQLRDAGQTLADVTAADVAAAVPPLVAAITKRPGYEILGSTHRMAYLTSRLSRLLIQVLTNMRQQQRRTGFRPMRTELQFGQIGDTRGLPGLSWPLPHGGRVNVRGKIDRLDVYRESDAQRFMVVDYKSTQHRFDDSDAYYGIALQMLTYVEAMANVPADPPFVPAGALYFHLQDPKFKFSTDLDLDIDRLKAFKYLGFLVAKDGADLAAVDKTISAETGGRSMMVPLGFKKDGAFNYNQSNILTPEDLSAYLLHNQALIIDAASRILAGDIALAPFQYGQESTVISNSDYQSIMLFDPATGFDHYNHVPKLKRKEVLGRVTTDPTQIPHHRQEDSQA.

It belongs to the helicase family. AddB/RexB type 2 subfamily. Heterodimer of AddA and RexB. Mg(2+) is required as a cofactor.

Its function is as follows. The heterodimer acts as both an ATP-dependent DNA helicase and an ATP-dependent, dual-direction single-stranded exonuclease. Recognizes the chi site generating a DNA molecule suitable for the initiation of homologous recombination. This subunit has 5' -&gt; 3' nuclease activity but not helicase activity. The protein is ATP-dependent helicase/deoxyribonuclease subunit B of Lacticaseibacillus casei (strain BL23) (Lactobacillus casei).